The primary structure comprises 206 residues: Thymidylate kinase (206 aa).

ATP is bound at residue G10–T17.

This sequence belongs to the thymidylate kinase family.

The enzyme catalyses dTMP + ATP = dTDP + ADP. In terms of biological role, phosphorylation of dTMP to form dTDP in both de novo and salvage pathways of dTTP synthesis. The protein is Thymidylate kinase of Bifidobacterium longum (strain NCC 2705).